The primary structure comprises 197 residues: Peptide deformylase (197 aa).

Fe cation-binding residues include cysteine 106 and histidine 148. The active site involves glutamate 149. Histidine 152 is a Fe cation binding site.

This sequence belongs to the polypeptide deformylase family. Fe(2+) is required as a cofactor.

It catalyses the reaction N-terminal N-formyl-L-methionyl-[peptide] + H2O = N-terminal L-methionyl-[peptide] + formate. Functionally, removes the formyl group from the N-terminal Met of newly synthesized proteins. Requires at least a dipeptide for an efficient rate of reaction. N-terminal L-methionine is a prerequisite for activity but the enzyme has broad specificity at other positions. The protein is Peptide deformylase of Mycobacterium leprae (strain TN).